Here is a 364-residue protein sequence, read N- to C-terminus: MTTPLIEIRQIYKSYGNTPILNNVSLNVNHGEFLTLLGPSGCGKTTLLRLISGFEQPTQGEIFINGQCVNQLPPQKRDVHTVFQSYALFPHLSVFENVAFALRCKKTSNQEIKERVFDALKLVQLELLAERNVKQLSGGQQQRVAIARAIINRPQVLLLDEPLSSLDYRLRKAMQSELKQLQKTLNMTFIFVTHDQEEALSMSDRIVVFNHGHIEQIGTPKAVYETPANLHVAMFIGEANIFDIQVHTVKDQDIVTNIEGIQLSCKNTGNYQVNEWLHLIVRPEDIRVWSLSEVEKTEGMLPGRIVDIIYKGSTVDLKVELSSGKIINASEFFDEDDDKLEYTLHETVWVQWLPGWEVLLPYEG.

Positions 6–236 constitute an ABC transporter domain; the sequence is IEIRQIYKSY…PANLHVAMFI (231 aa). An ATP-binding site is contributed by 38–45; it reads GPSGCGKT.

Belongs to the ABC transporter superfamily. Spermidine/putrescine importer (TC 3.A.1.11.1) family. The complex is composed of two ATP-binding proteins (PotA), two transmembrane proteins (PotB and PotC) and a solute-binding protein (PotD).

It localises to the cell inner membrane. It catalyses the reaction ATP + H2O + polyamine-[polyamine-binding protein]Side 1 = ADP + phosphate + polyamineSide 2 + [polyamine-binding protein]Side 1.. Part of the ABC transporter complex PotABCD involved in spermidine/putrescine import. Responsible for energy coupling to the transport system. The sequence is that of Spermidine/putrescine import ATP-binding protein PotA from Legionella pneumophila (strain Paris).